The primary structure comprises 1482 residues: Lysine-specific demethylase rbr-2 (1482 aa).

The interval 1–45 (MRGRRQEDIATTSSAPSTSTSHKKKTVSSNGSFRPRTQSNPGGKM) is disordered. The span at 11–20 (TTSSAPSTST) shows a compositional bias: low complexity. Residues 30-41 (NGSFRPRTQSNP) show a composition bias toward polar residues. The 42-residue stretch at 61-102 (APVYYPTSEEFADPIEYVAKIRPDAERYGVVKIVPPSDFKPP) folds into the JmjN domain. Residues 126–223 (VKEKHTFIER…HIEPFNRNLK (98 aa)) form the ARID domain. The interval 244–316 (YQHHHGTMRS…SKTEEDEEEN (73 aa)) is disordered. Positions 251–264 (MRSEPENTDGKNTE) are enriched in basic and acidic residues. Residues 277-288 (GRRRSKNKKPVP) are compositionally biased toward basic residues. The PHD-type 1 zinc finger occupies 322-374 (QVYCVSCNEGKDEDLLLLCDIEGCNSGRHTYCCDPVLDEVPEGEWRCPKCIES). The region spanning 471-637 (QYANHAWNLN…KGRECVQSYS (167 aa)) is the JmjC domain. Residues H517, D520, and H605 each coordinate Fe cation. A PHD-type 2 zinc finger spans residues 1206-1260 (LEGCCCLGGNKSDSSESVLSCIMCESQFHVRCCEWSTFFQHLPKGCFMCVRCLRG). Residues 1361-1403 (QQRPVKSKPSASLFDPKLNSKRKRPNPSQKDSSKSKSRKRQGQ) are disordered. The PHD-type 3 zinc finger occupies 1416–1471 (FKSCQARSCLKPFGDSVNWVMCDAGCKNWFHVICVGFTLREINDMHEYRCSSCLDH).

Belongs to the JARID1 histone demethylase family. Fe(2+) is required as a cofactor.

It is found in the nucleus. The catalysed reaction is N(6),N(6),N(6)-trimethyl-L-lysyl(4)-[histone H3] + 3 2-oxoglutarate + 3 O2 = L-lysyl(4)-[histone H3] + 3 formaldehyde + 3 succinate + 3 CO2. In terms of biological role, histone demethylase that specifically demethylates 'Lys-4' of histone H3, thereby playing a central role in histone code. Does not demethylate histone H3 'Lys-9', H3 'Lys-27', H3 'Lys-36', H3 'Lys-79' or H4 'Lys-20'. Demethylates trimethylated and dimethylated but not monomethylated H3 'Lys-4'. Involved in larval development and vulva formation. This chain is Lysine-specific demethylase rbr-2 (rbr-2), found in Caenorhabditis briggsae.